We begin with the raw amino-acid sequence, 827 residues long: Periplasmic nitrate reductase (827 aa).

Residues 1-32 (MNLSRRDFMKANAALAAASVAGLIIPVKNVNA) constitute a signal peptide (tat-type signal). The 4Fe-4S Mo/W bis-MGD-type domain occupies 37–93 (ITWDKAVCRFCGTGCAVLVGTKDGRVVASQGDPDAEVNRGLNCIKGYFLPKIMYGKD). Residues Cys-44, Cys-47, Cys-51, and Cys-79 each contribute to the [4Fe-4S] cluster site. Residues Lys-81, Gln-148, Asn-173, Cys-177, 210–217 (WGSNMAEM), 242–246 (STFEH), 261–263 (QSD), Met-372, Gln-376, Asn-482, 508–509 (SD), Lys-531, Asp-558, and 717–726 (TGRILEHWHT) contribute to the Mo-bis(molybdopterin guanine dinucleotide) site. Phe-793 serves as a coordination point for substrate. Mo-bis(molybdopterin guanine dinucleotide)-binding residues include Asn-801 and Lys-818.

Belongs to the prokaryotic molybdopterin-containing oxidoreductase family. NasA/NapA/NarB subfamily. Component of the periplasmic nitrate reductase NapAB complex composed of NapA and NapB. Requires [4Fe-4S] cluster as cofactor. Mo-bis(molybdopterin guanine dinucleotide) serves as cofactor. Predicted to be exported by the Tat system. The position of the signal peptide cleavage has not been experimentally proven.

The protein resides in the periplasm. The catalysed reaction is 2 Fe(II)-[cytochrome] + nitrate + 2 H(+) = 2 Fe(III)-[cytochrome] + nitrite + H2O. Its function is as follows. Catalytic subunit of the periplasmic nitrate reductase complex NapAB. Receives electrons from NapB and catalyzes the reduction of nitrate to nitrite. In Histophilus somni (strain 129Pt) (Haemophilus somnus), this protein is Periplasmic nitrate reductase.